The following is a 544-amino-acid chain: CTP synthase (544 aa).

Residues 1–267 are amidoligase domain; it reads MTKFVFVTGG…AQRVLEILNL (267 aa). Ser-13 serves as a coordination point for CTP. Position 13 (Ser-13) interacts with UTP. 14–19 is a binding site for ATP; sequence SIGKGI. Tyr-54 contributes to the L-glutamine binding site. Asp-71 contributes to the ATP binding site. Asp-71 and Glu-141 together coordinate Mg(2+). Residues 148-150, 188-193, and Lys-224 each bind CTP; these read DIE and KTKPTQ. Residues 188–193 and Lys-224 contribute to the UTP site; that span reads KTKPTQ. A Glutamine amidotransferase type-1 domain is found at 292–534; the sequence is EIAIVGKYVR…IEAALRSRPQ (243 aa). L-glutamine is bound at residue Gly-354. The active-site Nucleophile; for glutamine hydrolysis is the Cys-381. L-glutamine contacts are provided by residues 382 to 385, Glu-405, and Arg-462; that span reads LGMQ. Residues His-507 and Glu-509 contribute to the active site.

It belongs to the CTP synthase family. In terms of assembly, homotetramer.

The enzyme catalyses UTP + L-glutamine + ATP + H2O = CTP + L-glutamate + ADP + phosphate + 2 H(+). It carries out the reaction L-glutamine + H2O = L-glutamate + NH4(+). It catalyses the reaction UTP + NH4(+) + ATP = CTP + ADP + phosphate + 2 H(+). It participates in pyrimidine metabolism; CTP biosynthesis via de novo pathway; CTP from UDP: step 2/2. Its activity is regulated as follows. Allosterically activated by GTP, when glutamine is the substrate; GTP has no effect on the reaction when ammonia is the substrate. The allosteric effector GTP functions by stabilizing the protein conformation that binds the tetrahedral intermediate(s) formed during glutamine hydrolysis. Inhibited by the product CTP, via allosteric rather than competitive inhibition. Its function is as follows. Catalyzes the ATP-dependent amination of UTP to CTP with either L-glutamine or ammonia as the source of nitrogen. Regulates intracellular CTP levels through interactions with the four ribonucleotide triphosphates. This Synechococcus sp. (strain JA-2-3B'a(2-13)) (Cyanobacteria bacterium Yellowstone B-Prime) protein is CTP synthase.